The chain runs to 99 residues: Signal recognition particle 19 kDa protein (99 aa).

This sequence belongs to the SRP19 family. Part of the signal recognition particle protein translocation system, which is composed of SRP and FtsY. Archaeal SRP consists of a 7S RNA molecule of 300 nucleotides and two protein subunits: SRP54 and SRP19.

It is found in the cytoplasm. Involved in targeting and insertion of nascent membrane proteins into the cytoplasmic membrane. Binds directly to 7S RNA and mediates binding of the 54 kDa subunit of the SRP. The chain is Signal recognition particle 19 kDa protein from Pyrococcus horikoshii (strain ATCC 700860 / DSM 12428 / JCM 9974 / NBRC 100139 / OT-3).